A 365-amino-acid polypeptide reads, in one-letter code: MASQLNEAIFAARRRNDDDDTTRSSVFTYTNSNNTRGPFEGPNYHIAPRWVYNLTSIWMIFVVFASVFTNGLVIVATLKFKKLRHPLNWILVNMAIADLGETVIASTISVFNQIFGYFILGHPMCVLEGFTVSTCGITALWSLTVIAWERWFVVCKPFGNIKFDEKLAATGIIFSWVWSAGWCAPPMFGWSRFWPHGLKTSCGPDVFSGSSDPGVQSYMLVLMITCCIIPLAIIILCYLHVWWTIRQVAQQQKESESTQKAEREVSRMVVVMIVAYIFCWGPYTFFACFAAFSPGYSFHPLAAALPAYFAKSATIYNPIIYVFMNRQFRNCIYQMFGKKVDDGSEVSSTSRTEVSSVSNSSVSPA.

At 1 to 51 the chain is on the extracellular side; the sequence is MASQLNEAIFAARRRNDDDDTTRSSVFTYTNSNNTRGPFEGPNYHIAPRWV. The N-linked (GlcNAc...) asparagine glycan is linked to Asn-33. A helical membrane pass occupies residues 52 to 76; sequence YNLTSIWMIFVVFASVFTNGLVIVA. The Cytoplasmic portion of the chain corresponds to 77–88; that stretch reads TLKFKKLRHPLN. A helical membrane pass occupies residues 89–113; sequence WILVNMAIADLGETVIASTISVFNQ. The Extracellular portion of the chain corresponds to 114–128; that stretch reads IFGYFILGHPMCVLE. Cys-125 and Cys-202 are oxidised to a cystine. A helical transmembrane segment spans residues 129–148; the sequence is GFTVSTCGITALWSLTVIAW. Over 149-167 the chain is Cytoplasmic; sequence ERWFVVCKPFGNIKFDEKL. The helical transmembrane segment at 168-191 threads the bilayer; that stretch reads AATGIIFSWVWSAGWCAPPMFGWS. Residues 192–217 are Extracellular-facing; that stretch reads RFWPHGLKTSCGPDVFSGSSDPGVQS. The chain crosses the membrane as a helical span at residues 218–245; the sequence is YMLVLMITCCIIPLAIIILCYLHVWWTI. Residues 246–267 are Cytoplasmic-facing; that stretch reads RQVAQQQKESESTQKAEREVSR. A helical transmembrane segment spans residues 268-291; it reads MVVVMIVAYIFCWGPYTFFACFAA. The Extracellular segment spans residues 292-299; the sequence is FSPGYSFH. The chain crosses the membrane as a helical span at residues 300-324; the sequence is PLAAALPAYFAKSATIYNPIIYVFM. An N6-(retinylidene)lysine modification is found at Lys-311. The Cytoplasmic segment spans residues 325 to 365; sequence NRQFRNCIYQMFGKKVDDGSEVSSTSRTEVSSVSNSSVSPA. Residues 342 to 365 are disordered; it reads DGSEVSSTSRTEVSSVSNSSVSPA. Positions 345–365 are enriched in low complexity; the sequence is EVSSTSRTEVSSVSNSSVSPA.

The protein belongs to the G-protein coupled receptor 1 family. Opsin subfamily. In terms of processing, phosphorylated on some or all of the serine and threonine residues present in the C-terminal region.

Its subcellular location is the membrane. Its function is as follows. Visual pigments are the light-absorbing molecules that mediate vision. They consist of an apoprotein, opsin, covalently linked to cis-retinal. The protein is Red-sensitive opsin (opn1lw1) of Xenopus laevis (African clawed frog).